The following is an 830-amino-acid chain: Probable mixed-linked glucan synthase 7 (830 aa).

2 helical membrane passes run 61–81 (LTIF…ITYA) and 98–118 (AATF…MWVL). The active site involves Asp-186. Residues 251–279 (ELVRDRRRVRREYEEMRLRIDALQAADAR) adopt a coiled-coil conformation. Residues Asp-367 and Asp-369 each contribute to the substrate site. Asp-529 is an active-site residue. 6 helical membrane-spanning segments follow: residues 613 to 633 (LFLM…GGGW), 638 to 658 (TPTY…VAVL), 676 to 696 (FWMV…ALKV), 735 to 755 (ALMA…AAAG), 776 to 796 (LPVA…LGLM), and 805 to 825 (PILF…CLLL).

This sequence belongs to the glycosyltransferase 2 family. Plant cellulose synthase-like F subfamily. As to expression, expressed in mature pollen.

It is found in the golgi apparatus membrane. Its function is as follows. May catalyze both beta-1,3 and beta-1,4 glycosidic linkage on beta-D-glucan. Essential for (1,3;1,4)-beta-D-glucans synthesis in grasses and cereals (Poaceae). The mixed-linked glucans (which are not present in walls of dicotyledons or most other monocotyledonous plants) are particularly important constituents of the walls of the starchy endosperm and aleurone cells of cereal grains such as oats, wheat, rice and barley. They can account for up to 70% by weight of the wall. The protein is Probable mixed-linked glucan synthase 7 (CSLF7) of Oryza sativa subsp. japonica (Rice).